We begin with the raw amino-acid sequence, 676 residues long: Long-chain-fatty-acid--CoA ligase 1 (676 aa).

Residue 246 to 257 (YTSGSTGLPKGV) coordinates ATP. The FACS motif lies at 511–560 (DGWFRTGDVGELTPEGLLRIIDRKKNLVKTQNGEYIALEKLESRYRTSSL).

This sequence belongs to the ATP-dependent AMP-binding enzyme family. The cofactor is Mg(2+).

The catalysed reaction is a long-chain fatty acid + ATP + CoA = a long-chain fatty acyl-CoA + AMP + diphosphate. Esterification, concomitant with transport, of exogenous long-chain fatty acids into metabolically active CoA thioesters for subsequent degradation or incorporation into phospholipids. It may supplement intracellular myristoyl-CoA pools from exogenous myristate. Preferentially acts on C12:0-C16:0 fatty acids with myristic and pentadecanic acid (C15:0) having the highest activities. Appears to play a role in the maintenance of cell viability during stationary phase. The chain is Long-chain-fatty-acid--CoA ligase 1 (lcf1) from Schizosaccharomyces pombe (strain 972 / ATCC 24843) (Fission yeast).